Consider the following 206-residue polypeptide: dITP/XTP pyrophosphatase (206 aa).

A substrate-binding site is contributed by 7–12 (SSHGYK). The active-site Proton acceptor is the aspartate 70. Aspartate 70 is a binding site for Mg(2+). Substrate is bound by residues threonine 71, 154 to 157 (FGYD), lysine 177, and 182 to 183 (HR).

The protein belongs to the HAM1 NTPase family. In terms of assembly, homodimer. Mg(2+) serves as cofactor.

It catalyses the reaction XTP + H2O = XMP + diphosphate + H(+). The catalysed reaction is dITP + H2O = dIMP + diphosphate + H(+). It carries out the reaction ITP + H2O = IMP + diphosphate + H(+). In terms of biological role, pyrophosphatase that catalyzes the hydrolysis of nucleoside triphosphates to their monophosphate derivatives, with a high preference for the non-canonical purine nucleotides XTP (xanthosine triphosphate), dITP (deoxyinosine triphosphate) and ITP. Seems to function as a house-cleaning enzyme that removes non-canonical purine nucleotides from the nucleotide pool, thus preventing their incorporation into DNA/RNA and avoiding chromosomal lesions. The sequence is that of dITP/XTP pyrophosphatase from Chlamydia abortus (strain DSM 27085 / S26/3) (Chlamydophila abortus).